The chain runs to 213 residues: Orotidine 5'-phosphate decarboxylase (213 aa).

Substrate is bound by residues aspartate 9, lysine 31, 59–68, serine 115, 166–176, glycine 191, and arginine 192; these read DFKVADIPAT and PGVGAQGGKIE. Lysine 61 (proton donor) is an active-site residue.

This sequence belongs to the OMP decarboxylase family. Type 1 subfamily. Homodimer.

The enzyme catalyses orotidine 5'-phosphate + H(+) = UMP + CO2. It functions in the pathway pyrimidine metabolism; UMP biosynthesis via de novo pathway; UMP from orotate: step 2/2. Catalyzes the decarboxylation of orotidine 5'-monophosphate (OMP) to uridine 5'-monophosphate (UMP). The sequence is that of Orotidine 5'-phosphate decarboxylase from Methanocaldococcus jannaschii (strain ATCC 43067 / DSM 2661 / JAL-1 / JCM 10045 / NBRC 100440) (Methanococcus jannaschii).